The chain runs to 302 residues: Glycine--tRNA ligase alpha subunit (302 aa).

This sequence belongs to the class-II aminoacyl-tRNA synthetase family. As to quaternary structure, tetramer of two alpha and two beta subunits.

Its subcellular location is the cytoplasm. The enzyme catalyses tRNA(Gly) + glycine + ATP = glycyl-tRNA(Gly) + AMP + diphosphate. The sequence is that of Glycine--tRNA ligase alpha subunit from Haemophilus influenzae (strain 86-028NP).